Reading from the N-terminus, the 240-residue chain is Serine protease SplB (240 aa).

An N-terminal signal peptide occupies residues 1 to 36; that stretch reads MNKNVVIKSLATLTILTSVTGIGTTLVEEVQQTAKA. Residues histidine 75, aspartate 113, and serine 193 each act as charge relay system in the active site.

Belongs to the peptidase S1B family.

The protein localises to the secreted. Its function is as follows. Serine protease that cleaves specifically after the sequence Trp-Glu-Leu-Gln. This Staphylococcus aureus (strain Mu3 / ATCC 700698) protein is Serine protease SplB (splB).